Consider the following 211-residue polypeptide: MQTPHKEHLYKLLVIGDLGVGKTSIIKRYVHQNFSSHYRATIGVDFALKVLHWDPETVVRLQLWDIAGQERFGNMTRVYYREAMGAFIVFDVTRPATFEAVAKWKNDLDSKLTLPNGKPVSVVLLANKCDQGKDVLMNNGLKMDQFCKEHGFVGWFETSAKENINIDEASRCLVKHILANECDLLESIEPDIVKPHLTSPKVVSCSGCAKS.

The GTP site is built by G19, V20, G21, K22, T23, S24, S35, S36, Y38, and T41. T23 lines the Mg(2+) pocket. The short motif at 32-46 (QNFSSHYRATIGVDF) is the Switch 1 element. Mg(2+)-binding residues include T41 and D65. GTP-binding residues include G68, K128, D130, A160, and K161. A Switch 2 motif is present at residues 68–81 (GQERFGNMTRVYYR). C205 carries S-palmitoyl cysteine lipidation. C208 carries S-geranylgeranyl cysteine lipidation.

It belongs to the small GTPase superfamily. Rab family. In terms of assembly, interacts with ANKRD27. Requires Mg(2+) as cofactor.

It localises to the cell membrane. The protein localises to the cytoplasmic vesicle. Its subcellular location is the phagosome. The protein resides in the phagosome membrane. It is found in the melanosome. It localises to the melanosome membrane. It carries out the reaction GTP + H2O = GDP + phosphate + H(+). Regulated by guanine nucleotide exchange factors (GEFs) including the BLOC-3 complex composed of HPS1 and HPS4 which promote the exchange of bound GDP for free GTP. Regulated by GTPase activating proteins (GAPs) including SGSM2 which increase the GTP hydrolysis activity. Inhibited by GDP dissociation inhibitors (GDIs). Its function is as follows. The small GTPases Rab are key regulators of intracellular membrane trafficking, from the formation of transport vesicles to their fusion with membranes. Rabs cycle between an inactive GDP-bound form and an active GTP-bound form that is able to recruit to membranes different sets of downstream effectors directly responsible for vesicle formation, movement, tethering and fusion. RAB38 plays a role in the maturation of phagosomes that engulf pathogens, such as S.aureus and Mycobacterium. May be involved in melanosomal transport and docking. Involved in the proper sorting of TYRP1. Involved in peripheral melanosomal distribution of TYRP1 in melanocytes; the function, which probably is implicating vesicle-trafficking, includes cooperation with ANKRD27 and VAMP7. Plays an important role in the control of melanin production and melanosome biogenesis. In concert with RAB32, regulates the proper trafficking of melanogenic enzymes TYR, TYRP1 and DCT/TYRP2 to melanosomes in melanocytes. This is Ras-related protein Rab-38 from Mus musculus (Mouse).